A 114-amino-acid chain; its full sequence is MRFLNNKHRAKGLKAEEEACEFLKTLGFEMVERNFFSKFGEIDIIALKKGVLHFIEVKSGENFDPIYAITPSKLKKMIKTIRCYLSQKDPNSDFCIDALIVKNGKFELLENITF.

The protein belongs to the UPF0102 family.

The sequence is that of UPF0102 protein HPAG1_0809 from Helicobacter pylori (strain HPAG1).